Consider the following 575-residue polypeptide: Dihydroxy-acid dehydratase (575 aa).

The segment at 1-25 (MPTTDSARAADIKQPDIKPRSRDVT) is disordered. Basic and acidic residues predominate over residues 8-25 (RAADIKQPDIKPRSRDVT). C64 lines the [2Fe-2S] cluster pocket. D96 contacts Mg(2+). [2Fe-2S] cluster is bound at residue C137. Residues D138 and K139 each coordinate Mg(2+). K139 is subject to N6-carboxylysine. C214 lines the [2Fe-2S] cluster pocket. E465 provides a ligand contact to Mg(2+). S491 functions as the Proton acceptor in the catalytic mechanism.

This sequence belongs to the IlvD/Edd family. In terms of assembly, homodimer. The cofactor is [2Fe-2S] cluster. Mg(2+) serves as cofactor.

The enzyme catalyses (2R)-2,3-dihydroxy-3-methylbutanoate = 3-methyl-2-oxobutanoate + H2O. The catalysed reaction is (2R,3R)-2,3-dihydroxy-3-methylpentanoate = (S)-3-methyl-2-oxopentanoate + H2O. The protein operates within amino-acid biosynthesis; L-isoleucine biosynthesis; L-isoleucine from 2-oxobutanoate: step 3/4. Its pathway is amino-acid biosynthesis; L-valine biosynthesis; L-valine from pyruvate: step 3/4. Functions in the biosynthesis of branched-chain amino acids. Catalyzes the dehydration of (2R,3R)-2,3-dihydroxy-3-methylpentanoate (2,3-dihydroxy-3-methylvalerate) into 2-oxo-3-methylpentanoate (2-oxo-3-methylvalerate) and of (2R)-2,3-dihydroxy-3-methylbutanoate (2,3-dihydroxyisovalerate) into 2-oxo-3-methylbutanoate (2-oxoisovalerate), the penultimate precursor to L-isoleucine and L-valine, respectively. The protein is Dihydroxy-acid dehydratase of Mycobacterium avium (strain 104).